A 704-amino-acid polypeptide reads, in one-letter code: Polyribonucleotide nucleotidyltransferase (704 aa).

Mg(2+) is bound by residues Asp-488 and Asp-494. The KH domain maps to 555–614 (PRITTLKINPEKIRDVIGKGGATIRALTEETGTTIELEDDGTVKIASANGDATKEAIRRI). The region spanning 624–692 (GTIYNGKVVR…RQGRVRLSMK (69 aa)) is the S1 motif domain.

The protein belongs to the polyribonucleotide nucleotidyltransferase family. As to quaternary structure, component of the RNA degradosome, which is a multiprotein complex involved in RNA processing and mRNA degradation. The cofactor is Mg(2+).

It is found in the cytoplasm. It catalyses the reaction RNA(n+1) + phosphate = RNA(n) + a ribonucleoside 5'-diphosphate. In terms of biological role, involved in mRNA degradation. Catalyzes the phosphorolysis of single-stranded polyribonucleotides processively in the 3'- to 5'-direction. This Shewanella sediminis (strain HAW-EB3) protein is Polyribonucleotide nucleotidyltransferase.